The chain runs to 633 residues: uncharacterized protein (633 aa).

This is an uncharacterized protein from Archaeoglobus fulgidus (strain ATCC 49558 / DSM 4304 / JCM 9628 / NBRC 100126 / VC-16).